The following is a 238-amino-acid chain: End-binding protein 1 (238 aa).

The 103-residue stretch at F15 to D117 folds into the Calponin-homology (CH) domain. An interaction with aurora kinase region spans residues K101 to Q238. Residues K124–S165 are compositionally biased toward polar residues. Residues K124 to K169 form a disordered region. S148 carries the phosphoserine modification. Residues P156 to Q238 enclose the EB1 C-terminal domain.

This sequence belongs to the MAPRE family. Homodimer; disulfide-linked and via interaction of the C-terminal EB1-specific domains. Interacts with BOP1 (via C-terminal WD repeats). Interacts with giardin subunit gamma, neurogenic locus notch homolog protein, GL50803_8358 and GL50803_11327. Interacts (via C-terminal residues 101-238) with aurora kinase. Interacts with tubulin gamma chain. Post-translationally, phosphorylated in vitro by aurora kinase. Phosphorylation is important for cell division.

The protein resides in the nucleus membrane. It localises to the cytoplasm. Its subcellular location is the cytoskeleton. The protein localises to the spindle. It is found in the nucleus envelope. The protein resides in the flagellum axoneme. It localises to the cell projection. Its subcellular location is the cilium. The protein localises to the flagellum. Its function is as follows. Involved in cell division. Involved in mitosis. Regulates dynamics of microtubules (MTs) during mitosis. Required for cytokinesis. Binds polymerized MTs in vitro. Is able to rescue a mitotic division defect, the proper positioning of the nucleus, of the S.cerevisiae BIM1 knockout mutant in a complementation assay. May play a role in spindle positioning and MT distribution. May be involved in MT nucleation for the formation of median bodies and in the biogenesis of flagella. Based on its localization to both the flagellar exit point and the distal flagellar tips, it may mediate the transition from anterograde to retrograde intraflagellar transport (IFT). This Giardia intestinalis (strain ATCC 50803 / WB clone C6) (Giardia lamblia) protein is End-binding protein 1.